The sequence spans 271 residues: Protein-L-isoaspartate O-methyltransferase (271 aa).

Positions 1–15 (MRKPVTPPGNPPRPR) are enriched in pro residues. The segment at 1-60 (MRKPVTPPGNPPRPRSPGYGSTSLAPGITAANSNTRISPPTLARPAPAAGAGGQGGNLGL) is disordered. Positions 39–49 (PPTLARPAPAA) are enriched in low complexity. The active site involves S119.

This sequence belongs to the methyltransferase superfamily. L-isoaspartyl/D-aspartyl protein methyltransferase family.

It localises to the cytoplasm. The catalysed reaction is [protein]-L-isoaspartate + S-adenosyl-L-methionine = [protein]-L-isoaspartate alpha-methyl ester + S-adenosyl-L-homocysteine. In terms of biological role, catalyzes the methyl esterification of L-isoaspartyl residues in peptides and proteins that result from spontaneous decomposition of normal L-aspartyl and L-asparaginyl residues. It plays a role in the repair and/or degradation of damaged proteins. The protein is Protein-L-isoaspartate O-methyltransferase of Bordetella petrii (strain ATCC BAA-461 / DSM 12804 / CCUG 43448).